Reading from the N-terminus, the 151-residue chain is Small ribosomal subunit protein uS15 (151 aa).

The residue at position 27 (Lys27) is an N6-acetyllysine; alternate. At Lys27 the chain carries N6-succinyllysine; alternate. A Glycyl lysine isopeptide (Lys-Gly) (interchain with G-Cter in ubiquitin) cross-link involves residue Lys27. At Ser30 the chain carries Phosphoserine. Lys34 is subject to N6-succinyllysine. Tyr38 bears the Phosphotyrosine mark. A Glycyl lysine isopeptide (Lys-Gly) (interchain with G-Cter in SUMO2) cross-link involves residue Lys43.

The protein belongs to the universal ribosomal protein uS15 family. In terms of assembly, component of the small ribosomal subunit. Part of the small subunit (SSU) processome, composed of more than 70 proteins and the RNA chaperone small nucleolar RNA (snoRNA) U3. In terms of processing, ubiquitinated at Lys-27 by RNF14 and RNF25 in response to ribosome collisions (ribosome stalling).

The protein localises to the cytoplasm. It is found in the nucleus. The protein resides in the nucleolus. Its function is as follows. Component of the small ribosomal subunit. The ribosome is a large ribonucleoprotein complex responsible for the synthesis of proteins in the cell. Part of the small subunit (SSU) processome, first precursor of the small eukaryotic ribosomal subunit. During the assembly of the SSU processome in the nucleolus, many ribosome biogenesis factors, an RNA chaperone and ribosomal proteins associate with the nascent pre-rRNA and work in concert to generate RNA folding, modifications, rearrangements and cleavage as well as targeted degradation of pre-ribosomal RNA by the RNA exosome. The protein is Small ribosomal subunit protein uS15 of Homo sapiens (Human).